The sequence spans 333 residues: Transcription factor TGA2.2 (333 aa).

A compositionally biased stretch (polar residues) spans 1–14; that stretch reads MADASSRTDTSTVL. The disordered stretch occupies residues 1 to 48; sequence MADASSRTDTSTVLDTDDKNQMVDGQSGAIVPSNSSDRSDRSDKPMDQ. Residues 37–48 show a composition bias toward basic and acidic residues; that stretch reads DRSDRSDKPMDQ. In terms of domain architecture, bZIP spans 47–91; sequence DQKVLRRLAQNREAARKSRLRKKAYVQQLESSKLKLASLEQEINK. A basic motif region spans residues 49–69; the sequence is KVLRRLAQNREAARKSRLRKK. Residues 75–89 form a leucine-zipper region; the sequence is LESSKLKLASLEQEI. The DOG1 domain occupies 114–330; sequence AMTFDLEYAR…RALSSLWLAR (217 aa).

The protein belongs to the bZIP family. As to quaternary structure, interacts with NPR1/NH1. Interacts with NPR3/NH3.

The protein localises to the nucleus. In terms of biological role, transcriptional regulator involved in defense response. The polypeptide is Transcription factor TGA2.2 (Oryza sativa subsp. japonica (Rice)).